The sequence spans 456 residues: Histidinol dehydrogenase homolog (456 aa).

Histidine 279 serves as a coordination point for Zn(2+). Residues glutamate 347 and histidine 348 each act as proton acceptor in the active site. Histidine 440 provides a ligand contact to Zn(2+).

Belongs to the histidinol dehydrogenase family. Zn(2+) serves as cofactor.

The chain is Histidinol dehydrogenase homolog from Rhizobium meliloti (strain 1021) (Ensifer meliloti).